Consider the following 551-residue polypeptide: Urocanate hydratase (551 aa).

Residues 48-49, Gln-126, 172-174, Glu-192, Arg-197, 238-239, 259-263, 269-270, and Tyr-318 each bind NAD(+); these read GG, GMG, NA, QTSAH, and YI. Residue Cys-406 is part of the active site. Position 488 (Gly-488) interacts with NAD(+).

It belongs to the urocanase family. NAD(+) serves as cofactor.

The protein localises to the cytoplasm. It carries out the reaction 4-imidazolone-5-propanoate = trans-urocanate + H2O. Its pathway is amino-acid degradation; L-histidine degradation into L-glutamate; N-formimidoyl-L-glutamate from L-histidine: step 2/3. In terms of biological role, catalyzes the conversion of urocanate to 4-imidazolone-5-propionate. This Symbiobacterium thermophilum (strain DSM 24528 / JCM 14929 / IAM 14863 / T) protein is Urocanate hydratase.